Here is a 251-residue protein sequence, read N- to C-terminus: Prolactin-7B1 (251 aa).

An N-terminal signal peptide occupies residues 1 to 29; that stretch reads MNTSLTQLCFWALQILLMSNLLLWEDVVS. 2 N-linked (GlcNAc...) asparagine glycosylation sites follow: asparagine 2 and asparagine 73. Cystine bridges form between cysteine 100/cysteine 216 and cysteine 233/cysteine 241.

It belongs to the somatotropin/prolactin family. In terms of tissue distribution, expression restricted to placenta. Abundantly expressed in trophoblast cells of the junctional zone and trophoblasts migrating into the mesometrial decidua.

It localises to the secreted. The protein is Prolactin-7B1 (Prl7b1) of Mus musculus (Mouse).